We begin with the raw amino-acid sequence, 200 residues long: uncharacterized protein (200 aa).

It belongs to the HAD-like hydrolase superfamily. CbbY/CbbZ/Gph/YieH family.

This is an uncharacterized protein from Haemophilus influenzae (strain ATCC 51907 / DSM 11121 / KW20 / Rd).